Consider the following 222-residue polypeptide: Voltage-dependent calcium channel gamma-1 subunit (222 aa).

At Met-1–Arg-10 the chain is on the cytoplasmic side. The chain crosses the membrane as a helical span at residues Val-11–Ser-29. At Asp-30–Ala-108 the chain is on the extracellular side. Asn-43 and Asn-79 each carry an N-linked (GlcNAc...) asparagine glycan. Cysteines 57 and 80 form a disulfide. Residues Ala-109 to Phe-129 form a helical membrane-spanning segment. Residues Arg-130–Asp-134 lie on the Cytoplasmic side of the membrane. The helical transmembrane segment at Tyr-135–Leu-155 threads the bilayer. Residues Glu-156 to Ser-179 lie on the Extracellular side of the membrane. A helical membrane pass occupies residues Trp-180–Leu-204. At Pro-205 to His-222 the chain is on the cytoplasmic side.

The protein belongs to the PMP-22/EMP/MP20 family. CACNG subfamily. As to quaternary structure, component of a calcium channel complex consisting of a pore-forming alpha subunit (CACNA1S) and the ancillary subunits CACNB1 or CACNB2, CACNG1 and CACNA2D1. The channel complex contains alpha, beta, gamma and delta subunits in a 1:1:1:1 ratio, i.e. it contains either CACNB1 or CACNB2. Post-translationally, N-glycosylated. In terms of tissue distribution, skeletal muscle (at protein level).

The protein resides in the cell membrane. Its subcellular location is the sarcolemma. Functionally, regulatory subunit of the voltage-gated calcium channel that gives rise to L-type calcium currents in skeletal muscle. Regulates channel inactivation kinetics. The protein is Voltage-dependent calcium channel gamma-1 subunit (CACNG1) of Oryctolagus cuniculus (Rabbit).